Consider the following 335-residue polypeptide: tRNA N6-adenosine threonylcarbamoyltransferase (335 aa).

A divalent metal cation is bound by residues His109, His113, and Tyr130. Residues Tyr130–Gly134, Asp162, Gly177, Glu181, and Asn266 contribute to the substrate site. Residue Asp294 coordinates a divalent metal cation.

The protein belongs to the KAE1 / TsaD family. In terms of assembly, component of the EKC/KEOPS complex composed of at least GON7, TP53RK, TPRKB, OSGEP and LAGE3; the whole complex dimerizes. Requires a divalent metal cation as cofactor.

The protein resides in the cytoplasm. It is found in the nucleus. It catalyses the reaction L-threonylcarbamoyladenylate + adenosine(37) in tRNA = N(6)-L-threonylcarbamoyladenosine(37) in tRNA + AMP + H(+). Functionally, component of the EKC/KEOPS complex that is required for the formation of a threonylcarbamoyl group on adenosine at position 37 (t(6)A37) in tRNAs that read codons beginning with adenine. The complex is probably involved in the transfer of the threonylcarbamoyl moiety of threonylcarbamoyl-AMP (TC-AMP) to the N6 group of A37. OSGEP likely plays a direct catalytic role in this reaction, but requires other protein(s) of the complex to fulfill this activity. The protein is tRNA N6-adenosine threonylcarbamoyltransferase of Bos taurus (Bovine).